Consider the following 438-residue polypeptide: Xylose isomerase (438 aa).

Residues H100 and D103 contribute to the active site. Positions 231, 267, 270, 295, 306, 308, and 338 each coordinate Mg(2+).

Belongs to the xylose isomerase family. Homotetramer. The cofactor is Mg(2+).

It is found in the cytoplasm. It carries out the reaction alpha-D-xylose = alpha-D-xylulofuranose. In Caldanaerobacter subterraneus subsp. yonseiensis (Thermoanaerobacter yonseiensis), this protein is Xylose isomerase.